A 567-amino-acid chain; its full sequence is MPHETLLDNQGWFKKLARRFGPGHVVNTCFLIVMLFSTLLTWREVMILKDAYVASQRNHLGSVANVLDRQLQFNMDRLIFLRNGMHEALVAPLAFSALQSAVTQFEQRRVRHFWQLELDKRRTLPLYGVSDQFVARTTLLSRESRDLANELTATLELGYLARSSAMLTLETMYVSRSGFYLSTLPTAYGSDIVSRYYQYVTQPWFIEQSQRRNPQRGVRWFTSAQPYVADEQKKVTASLPLDHDNYWYGVLAMDIPVASLQQFLRDAAEKDIEGEYQLYDNHLRLLTDSAPEQQTENTLNDRERALLAREIEKDTLGGLRLGTHYVSWERLDHFDGVLLRVHTLREGIQGNFGSISIALTLLWGLFTAMLLISWGVIRHMVKNMFVLQNSPQWQAWHDPLTRLYNRGALFEKASRLAKRYREARQPFSVIQLDLDYFKSVNDRFGHQAGDRVLSHAAGLIGSTIRAHDIAGRVGGEEFCIVLPGATKAQALQIAERIRQRINDKEILVTKSTTLRISASMGISSAEEYGDYDFEQLQSLADKRLYYAKQSGRNRICASDATQEREKK.

2 helical membrane-spanning segments follow: residues 20-40 (FGPGHVVNTCFLIVMLFSTLL) and 357-377 (IALTLLWGLFTAMLLISWGVI). In terms of domain architecture, GGDEF spans 425–560 (QPFSVIQLDL…GRNRICASDA (136 aa)). Aspartate 433 contacts Mg(2+). Substrate-binding residues include asparagine 441, histidine 446, and aspartate 450. Glutamate 476 serves as a coordination point for Mg(2+). The active-site Proton acceptor is the glutamate 476.

As to quaternary structure, homodimer. Requires Mg(2+) as cofactor.

Its subcellular location is the cell inner membrane. The enzyme catalyses 2 GTP = 3',3'-c-di-GMP + 2 diphosphate. It participates in glycan metabolism; bacterial cellulose biosynthesis. The protein operates within purine metabolism; 3',5'-cyclic di-GMP biosynthesis. Functionally, catalyzes the synthesis of cyclic-di-GMP (c-di-GMP) via the condensation of 2 GTP molecules. Cyclic-di-GMP is a second messenger which controls cell surface-associated traits in bacteria. Involved in the regulation of cellulose production. This chain is Probable diguanylate cyclase DgcQ, found in Salmonella typhi.